The sequence spans 117 residues: Toxin CSTX-8 (117 aa).

The N-terminal stretch at 1–20 (MKVLVICAVLFLAIFSNSSA) is a signal peptide. A propeptide spanning residues 21-47 (ETEDDFLEDESFQADDVIPFLASEQVR) is cleaved from the precursor. Disulfide bonds link Cys50–Cys65, Cys57–Cys74, Cys64–Cys95, and Cys76–Cys93. Residues 82–87 (RSETDR) constitute a propeptide that is removed on maturation. Position 116 is a threonine amide (Thr116).

It belongs to the neurotoxin 19 (CSTX) family. 12 subfamily. In terms of assembly, heterodimer of A and B chains; disulfide-linked. Interacts with CSTX-1 (AC P81694), and with CSTX-9 (AC P58604). Expressed by the venom gland.

It is found in the secreted. Its subcellular location is the target cell membrane. Its function is as follows. Synergistic toxin that induces or increases a cytolytic effect when combined with CSTX-1 (AC P81694) or CSTX-9 (AC P58604). When alone, has a weak insecticidal activity, with an unknown molecular target. In Cupiennius salei (American wandering spider), this protein is Toxin CSTX-8.